The primary structure comprises 500 residues: Glutamate--tRNA ligase (500 aa).

The 'HIGH' region motif lies at P13–M23. The 'KMSKS' region motif lies at K258–R262. K261 serves as a coordination point for ATP.

This sequence belongs to the class-I aminoacyl-tRNA synthetase family. Glutamate--tRNA ligase type 1 subfamily. Monomer.

Its subcellular location is the cytoplasm. The catalysed reaction is tRNA(Glu) + L-glutamate + ATP = L-glutamyl-tRNA(Glu) + AMP + diphosphate. Functionally, catalyzes the attachment of glutamate to tRNA(Glu) in a two-step reaction: glutamate is first activated by ATP to form Glu-AMP and then transferred to the acceptor end of tRNA(Glu). The protein is Glutamate--tRNA ligase of Corynebacterium jeikeium (strain K411).